We begin with the raw amino-acid sequence, 1133 residues long: Protein cordon-bleu (1133 aa).

Pro residues predominate over residues 1-11 (MKARAPPPPGK). Positions 1 to 25 (MKARAPPPPGKPAAQNVHSEQKLPH) are disordered. Phosphoserine occurs at positions 31, 34, 196, 219, 256, and 278. Disordered stretches follow at residues 246–393 (AEHL…SVNG) and 442–568 (QGGI…GQAS). Positions 272–301 (CVTTPNSPSLHSRSLTLGPSLSLGNISGMS) are enriched in polar residues. The KKRRAP 1 motif lies at 307–312 (KKRRAP). Phosphoserine is present on residues serine 330 and serine 333. The KKRRAP 2 motif lies at 340–345 (KKRRAP). A compositionally biased stretch (pro residues) spans 345–358 (PAPPPPQPPPPSPV). Position 356 is a phosphoserine (serine 356). The segment covering 361 to 371 (NRKEDKEENRK) has biased composition (basic and acidic residues). 2 stretches are compositionally biased toward polar residues: residues 382–393 (TDTSSLTSSVNG) and 442–464 (QGGIASQRSHLPPYQTEQSQPFI). Phosphoserine is present on serine 447. Residues 512-524 (STDDPKAKDKDKM) show a composition bias toward basic and acidic residues. Residue serine 614 is modified to Phosphoserine. The tract at residues 664–720 (APSTTITATSEKPQRDETKAGFTLTTPEQQPASQEYGAPPEEDRSRPHSAVSCPVKV) is disordered. Composition is skewed to polar residues over residues 665 to 674 (PSTTITATSE) and 686 to 696 (TLTTPEQQPAS). Serine 924 is subject to Phosphoserine. 2 disordered regions span residues 942-961 (PSPLSADGQNSDDALPSSIF) and 990-1018 (HTSGGRDKLRKTAEQASEGRPKKPSYVEA). WH2 domains lie at 981-1001 (LHSALMEAIHTSGGRDKLRKT) and 1021-1041 (ERSALLAAIRGHSGTLSLRKV). The span at 993-1010 (GGRDKLRKTAEQASEGRP) shows a compositional bias: basic and acidic residues. The tract at residues 1063–1091 (DKPQQEDRGLPPPPALPPPSTPASQVPSA) is disordered. Residues 1072 to 1083 (LPPPPALPPPST) are compositionally biased toward pro residues. Residue serine 1099 is modified to Phosphoserine. The 21-residue stretch at 1109 to 1129 (ARQALMDAIRSGTGAARLRKV) folds into the WH2 3 domain.

As to quaternary structure, identified in a complex composed of ACTA1, COBL, GSN AND TMSB4X. Identified in a complex composed of COBL, PACSIN1 and WASL. Interacts with PACSIN1, PACSIN2 and PACSIN3. Interacts (via WH2 domains) with actin monomers. Interacts with both PACSIN1 and DBNL. In terms of tissue distribution, detected in brain (at protein level).

It localises to the cell membrane. Its subcellular location is the cytoplasm. It is found in the cytoskeleton. The protein resides in the cell projection. The protein localises to the ruffle. It localises to the cytosol. Functionally, plays an important role in the reorganization of the actin cytoskeleton. Binds to and sequesters actin monomers (G actin). Nucleates actin polymerization by assembling three actin monomers in cross-filament orientation and thereby promotes growth of actin filaments at the barbed end. Can also mediate actin depolymerization at barbed ends and severing of actin filaments. Promotes formation of cell ruffles. Regulates dendrite branching in Purkinje cells. Regulates neuron morphogenesis and increases branching of axons and dendrites. In Rattus norvegicus (Rat), this protein is Protein cordon-bleu (Cobl).